The primary structure comprises 830 residues: Periplasmic nitrate reductase (830 aa).

A signal peptide (tat-type signal) is located at residues 1-32 (MELNRRDFMKANAAVAAAAAAGITIPVKNVHA). Positions 39-95 (IRWDKAPCRYCGTGCSVLVGTKDGRVVATQGDPDAEVNRGLNCIKGYFLSKIMYGAD) constitute a 4Fe-4S Mo/W bis-MGD-type domain. Positions 46, 49, 53, and 81 each coordinate [4Fe-4S] cluster. Mo-bis(molybdopterin guanine dinucleotide)-binding positions include Lys-83, Gln-151, Asn-176, Cys-180, 213 to 220 (WGSNMAEM), 244 to 248 (STFEH), Met-374, Gln-378, Asn-484, 510 to 511 (SD), Lys-533, Asp-560, and 720 to 729 (TGRVLEHWHT). Phe-796 lines the substrate pocket. Mo-bis(molybdopterin guanine dinucleotide) contacts are provided by Asn-804 and Lys-821.

It belongs to the prokaryotic molybdopterin-containing oxidoreductase family. NasA/NapA/NarB subfamily. Component of the periplasmic nitrate reductase NapAB complex composed of NapA and NapB. The cofactor is [4Fe-4S] cluster. Mo-bis(molybdopterin guanine dinucleotide) is required as a cofactor. Predicted to be exported by the Tat system. The position of the signal peptide cleavage has not been experimentally proven.

The protein resides in the periplasm. It carries out the reaction 2 Fe(II)-[cytochrome] + nitrate + 2 H(+) = 2 Fe(III)-[cytochrome] + nitrite + H2O. Catalytic subunit of the periplasmic nitrate reductase complex NapAB. Receives electrons from NapB and catalyzes the reduction of nitrate to nitrite. In Mannheimia succiniciproducens (strain KCTC 0769BP / MBEL55E), this protein is Periplasmic nitrate reductase.